A 92-amino-acid polypeptide reads, in one-letter code: Sperm-specific protein Phi-1 (92 aa).

The interval 1-92 is disordered; it reads MPSPTRRSSK…RVRAKKKKKK (92 aa). Composition is skewed to basic residues over residues 7 to 19 and 29 to 92; these read RSSKSRSKSRSRS and AAKR…KKKK.

In terms of tissue distribution, sperm.

It localises to the nucleus. Its subcellular location is the chromosome. Functionally, involved in nuclear basic protein transition: histones are replaced by spermatid specific proteins which are themselves replaced by protamines in late spermatids. The sequence is that of Sperm-specific protein Phi-1 from Mytilus edulis (Blue mussel).